The chain runs to 416 residues: Cell division control protein 3 (416 aa).

The 276-residue stretch at 32-307 (RGFSLNIMAI…ENYRTEKLKR (276 aa)) folds into the Septin-type G domain. Residues 42-49 (GESGLGKA) are G1 motif. Residues 42 to 49 (GESGLGKA), serine 79, glycine 105, 184 to 192 (KSDTLTDEE), glycine 240, and arginine 256 each bind GTP. A G3 motif region spans residues 102-105 (TAPG). The G4 motif stretch occupies residues 183-186 (AKSD). Positions 323 to 399 (AAKQEEERAL…QLEKQKLLPQ (77 aa)) form a coiled coil. Residues 392–416 (EKQKLLPQDPPAQPAPQKSRKGFLR) are disordered.

This sequence belongs to the TRAFAC class TrmE-Era-EngA-EngB-Septin-like GTPase superfamily. Septin GTPase family.

The protein localises to the bud neck. Functionally, plays a role in the cell cycle. Involved in the formation of the ring of filaments in the neck region at the mother-bud junction during mitosis. In Candida albicans (Yeast), this protein is Cell division control protein 3 (CDC3).